The sequence spans 83 residues: Protein Vpu (83 aa).

Residues 1–4 (MLSL) lie on the Extracellular side of the membrane. The chain crosses the membrane as a helical span at residues 5–25 (GFIALGAAVSIAVIVWALLYR). The Cytoplasmic segment spans residues 26-83 (EYKKIKLQEKIKHIRQRIREREEDSGNESDGDAEWLDGDEEWLVTLLSSSKLDQGNWV). Phosphoserine; by host CK2 is present on residues S50 and S54.

It belongs to the HIV-1 VPU protein family. Homopentamer. Interacts with host CD4 and BRTC; these interactions induce proteasomal degradation of CD4. Interacts with host BST2; this interaction leads to the degradation of host BST2. Interacts with host FBXW11. Interacts with host AP1M1; this interaction plays a role in the mistrafficking and subsequent degradation of host BST2. Interacts with host RANBP2; this interaction allows Vpu to down-regulate host BLM sumoylation. Post-translationally, phosphorylated by host CK2. This phosphorylation is necessary for interaction with human BTRC and degradation of CD4.

It localises to the host membrane. With respect to regulation, ion channel activity is inhibited by hexamethylene amiloride in vitro. Functionally, enhances virion budding by targeting host CD4 and Tetherin/BST2 to proteasome degradation. Degradation of CD4 prevents any unwanted premature interactions between viral Env and its host receptor CD4 in the endoplasmic reticulum. Degradation of antiretroviral protein Tetherin/BST2 is important for virion budding, as BST2 tethers new viral particles to the host cell membrane. Mechanistically, Vpu bridges either CD4 or BST2 to BTRC, a substrate recognition subunit of the Skp1/Cullin/F-box protein E3 ubiquitin ligase, induces their ubiquitination and subsequent proteasomal degradation. The alteration of the E3 ligase specificity by Vpu seems to promote the degradation of host IKBKB, leading to NF-kappa-B down-regulation and subsequent apoptosis. Acts as a viroporin that forms an oligomeric ion channel in membranes. Modulates the host DNA repair mechanisms to promote degradation of nuclear viral cDNA in cells that are already productively infected in order to suppress immune sensing and proviral hyper-integration (superinfection). Manipulates PML-NBs and modulates SUMOylation of host BLM protein thereby enhancing its DNA-end processing activity toward viral unintegrated linear DNA. Also inhibits RAD52-mediated homologous repair of viral cDNA, preventing the generation of dead-end circular forms of single copies of the long terminal repeat and permitting sustained nucleolytic attack. The chain is Protein Vpu from Human immunodeficiency virus type 1 group N (isolate YBF30) (HIV-1).